The sequence spans 151 residues: Large ribosomal subunit protein bL9 (151 aa).

This sequence belongs to the bacterial ribosomal protein bL9 family.

Binds to the 23S rRNA. The chain is Large ribosomal subunit protein bL9 from Francisella tularensis subsp. tularensis (strain FSC 198).